A 20-amino-acid polypeptide reads, in one-letter code: TVKVTVTGAAGQIGYALLFR.

Residue glycine 8 to glycine 14 participates in NAD(+) binding.

This sequence belongs to the LDH/MDH superfamily. MDH type 2 family.

The catalysed reaction is (S)-malate + NAD(+) = oxaloacetate + NADH + H(+). Functionally, catalyzes the reversible oxidation of malate to oxaloacetate. The sequence is that of Malate dehydrogenase (mdh) from Microtetraspora glauca.